Reading from the N-terminus, the 354-residue chain is Selenide, water dikinase (354 aa).

The active site involves Cys-23. Residues Lys-26 and 54–56 contribute to the ATP site; that span reads TAD. Position 57 (Asp-57) interacts with Mg(2+). Residues Asp-74, Asp-97, and 145–147 each bind ATP; that span reads GHS. Asp-97 is a Mg(2+) binding site. Residue Asp-233 coordinates Mg(2+).

The protein belongs to the selenophosphate synthase 1 family. Class I subfamily. As to quaternary structure, homodimer. Mg(2+) serves as cofactor.

The enzyme catalyses hydrogenselenide + ATP + H2O = selenophosphate + AMP + phosphate + 2 H(+). Synthesizes selenophosphate from selenide and ATP. This Paraburkholderia xenovorans (strain LB400) protein is Selenide, water dikinase.